The chain runs to 501 residues: 1-aminocyclopropane-1-carboxylate synthase-like protein 1 (501 aa).

Glu-105 contributes to the substrate binding site. An N6-(pyridoxal phosphate)lysine modification is found at Lys-323. The segment at 480–501 is disordered; it reads GKSQVAEDPRPSQSQEPSDQRR. Residues 490–501 are compositionally biased toward polar residues; it reads PSQSQEPSDQRR.

Belongs to the class-I pyridoxal-phosphate-dependent aminotransferase family.

Does not catalyze the synthesis of 1-aminocyclopropane-1-carboxylate but is capable of catalyzing the deamination of L-vinylglycine. The sequence is that of 1-aminocyclopropane-1-carboxylate synthase-like protein 1 (ACCS) from Homo sapiens (Human).